Here is a 354-residue protein sequence, read N- to C-terminus: S-adenosylmethionine:tRNA ribosyltransferase-isomerase (354 aa).

The protein belongs to the QueA family. Monomer.

It localises to the cytoplasm. It catalyses the reaction 7-aminomethyl-7-carbaguanosine(34) in tRNA + S-adenosyl-L-methionine = epoxyqueuosine(34) in tRNA + adenine + L-methionine + 2 H(+). It functions in the pathway tRNA modification; tRNA-queuosine biosynthesis. Functionally, transfers and isomerizes the ribose moiety from AdoMet to the 7-aminomethyl group of 7-deazaguanine (preQ1-tRNA) to give epoxyqueuosine (oQ-tRNA). The protein is S-adenosylmethionine:tRNA ribosyltransferase-isomerase of Pseudomonas syringae pv. syringae (strain B728a).